Here is a 238-residue protein sequence, read N- to C-terminus: Purine nucleoside phosphorylase DeoD-type (238 aa).

H4 lines the a purine D-ribonucleoside pocket. Residues G20, R24, R43, and 87 to 90 (RVGS) contribute to the phosphate site. Residues 179 to 181 (EME) and 203 to 204 (SD) each bind a purine D-ribonucleoside. The active-site Proton donor is D204.

The protein belongs to the PNP/UDP phosphorylase family. As to quaternary structure, homohexamer; trimer of homodimers.

It catalyses the reaction a purine D-ribonucleoside + phosphate = a purine nucleobase + alpha-D-ribose 1-phosphate. It carries out the reaction a purine 2'-deoxy-D-ribonucleoside + phosphate = a purine nucleobase + 2-deoxy-alpha-D-ribose 1-phosphate. Its function is as follows. Catalyzes the reversible phosphorolytic breakdown of the N-glycosidic bond in the beta-(deoxy)ribonucleoside molecules, with the formation of the corresponding free purine bases and pentose-1-phosphate. This is Purine nucleoside phosphorylase DeoD-type from Mannheimia succiniciproducens (strain KCTC 0769BP / MBEL55E).